The primary structure comprises 261 residues: Cytochrome c oxidase subunit 3 (261 aa).

Over 1–15 the chain is Mitochondrial matrix; that stretch reads MTHQSHAYHMVKPSP. A helical transmembrane segment spans residues 16–34; the sequence is WPLTGALSALLMTSGLAMW. Topologically, residues 35–40 are mitochondrial intermembrane; sequence FHFYST. Residues 41-66 form a helical membrane-spanning segment; that stretch reads TLLTLGLLTNTLTMYQWWRDVMREGT. Topologically, residues 67–72 are mitochondrial matrix; the sequence is YQGHHT. The helical transmembrane segment at 73 to 105 threads the bilayer; the sequence is PPVQKGLRYGMILFITSEVFFFAGFFWAFYHSS. At 106-128 the chain is on the mitochondrial intermembrane side; it reads LAPTPQLGGHWPPTGITPLNPLE. A helical membrane pass occupies residues 129–152; it reads VPLLNTSVLLASGVSITWAHHSLM. Residues 153-155 are Mitochondrial matrix-facing; the sequence is ENN. The chain crosses the membrane as a helical span at residues 156–183; that stretch reads RNQMIQALLITILLGLYFTLLQASEYFE. Topologically, residues 184–190 are mitochondrial intermembrane; sequence SPFTISD. Residues 191-223 traverse the membrane as a helical segment; that stretch reads GIYGSTFFVATGFHGLHVIIGSTFLTICLIRQL. Residues 224–232 lie on the Mitochondrial matrix side of the membrane; the sequence is MFHFTSKHH. Residues 233–256 traverse the membrane as a helical segment; that stretch reads FGFQAAAWYWHFVDVVWLFLYVSI. The Mitochondrial intermembrane segment spans residues 257 to 261; it reads YWWGS.

It belongs to the cytochrome c oxidase subunit 3 family. Component of the cytochrome c oxidase (complex IV, CIV), a multisubunit enzyme composed of 14 subunits. The complex is composed of a catalytic core of 3 subunits MT-CO1, MT-CO2 and MT-CO3, encoded in the mitochondrial DNA, and 11 supernumerary subunits COX4I, COX5A, COX5B, COX6A, COX6B, COX6C, COX7A, COX7B, COX7C, COX8 and NDUFA4, which are encoded in the nuclear genome. The complex exists as a monomer or a dimer and forms supercomplexes (SCs) in the inner mitochondrial membrane with NADH-ubiquinone oxidoreductase (complex I, CI) and ubiquinol-cytochrome c oxidoreductase (cytochrome b-c1 complex, complex III, CIII), resulting in different assemblies (supercomplex SCI(1)III(2)IV(1) and megacomplex MCI(2)III(2)IV(2)).

It localises to the mitochondrion inner membrane. The enzyme catalyses 4 Fe(II)-[cytochrome c] + O2 + 8 H(+)(in) = 4 Fe(III)-[cytochrome c] + 2 H2O + 4 H(+)(out). In terms of biological role, component of the cytochrome c oxidase, the last enzyme in the mitochondrial electron transport chain which drives oxidative phosphorylation. The respiratory chain contains 3 multisubunit complexes succinate dehydrogenase (complex II, CII), ubiquinol-cytochrome c oxidoreductase (cytochrome b-c1 complex, complex III, CIII) and cytochrome c oxidase (complex IV, CIV), that cooperate to transfer electrons derived from NADH and succinate to molecular oxygen, creating an electrochemical gradient over the inner membrane that drives transmembrane transport and the ATP synthase. Cytochrome c oxidase is the component of the respiratory chain that catalyzes the reduction of oxygen to water. Electrons originating from reduced cytochrome c in the intermembrane space (IMS) are transferred via the dinuclear copper A center (CU(A)) of subunit 2 and heme A of subunit 1 to the active site in subunit 1, a binuclear center (BNC) formed by heme A3 and copper B (CU(B)). The BNC reduces molecular oxygen to 2 water molecules using 4 electrons from cytochrome c in the IMS and 4 protons from the mitochondrial matrix. In Pan troglodytes (Chimpanzee), this protein is Cytochrome c oxidase subunit 3 (MT-CO3).